The primary structure comprises 132 residues: Fatty acid-binding protein, adipocyte (132 aa).

N-acetylcysteine is present on C2. S13 carries the phosphoserine modification. At Y20 the chain carries Phosphotyrosine; by Tyr-kinases. Positions K22–K32 match the Nuclear localization signal motif. R127–Y129 provides a ligand contact to a fatty acid.

The protein belongs to the calycin superfamily. Fatty-acid binding protein (FABP) family. Monomer. Homodimer. Interacts with PPARG.

The protein localises to the cytoplasm. The protein resides in the nucleus. Lipid transport protein in adipocytes. Binds both long chain fatty acids and retinoic acid. Delivers long-chain fatty acids and retinoic acid to their cognate receptors in the nucleus. The chain is Fatty acid-binding protein, adipocyte (Fabp4) from Mus musculus (Mouse).